We begin with the raw amino-acid sequence, 205 residues long: ATP phosphoribosyltransferase (205 aa).

Belongs to the ATP phosphoribosyltransferase family. Short subfamily. As to quaternary structure, heteromultimer composed of HisG and HisZ subunits.

Its subcellular location is the cytoplasm. It carries out the reaction 1-(5-phospho-beta-D-ribosyl)-ATP + diphosphate = 5-phospho-alpha-D-ribose 1-diphosphate + ATP. Its pathway is amino-acid biosynthesis; L-histidine biosynthesis; L-histidine from 5-phospho-alpha-D-ribose 1-diphosphate: step 1/9. Its function is as follows. Catalyzes the condensation of ATP and 5-phosphoribose 1-diphosphate to form N'-(5'-phosphoribosyl)-ATP (PR-ATP). Has a crucial role in the pathway because the rate of histidine biosynthesis seems to be controlled primarily by regulation of HisG enzymatic activity. The chain is ATP phosphoribosyltransferase from Leptospira borgpetersenii serovar Hardjo-bovis (strain JB197).